The primary structure comprises 475 residues: Ribulose bisphosphate carboxylase large chain (475 aa).

A propeptide spanning residues 1 to 2 (MS) is cleaved from the precursor. Proline 3 carries the N-acetylproline modification. Lysine 14 is subject to N6,N6,N6-trimethyllysine. Substrate contacts are provided by asparagine 123 and threonine 173. Catalysis depends on lysine 175, which acts as the Proton acceptor. Lysine 177 contributes to the substrate binding site. Residues lysine 201, aspartate 203, and glutamate 204 each contribute to the Mg(2+) site. Lysine 201 carries the post-translational modification N6-carboxylysine. Histidine 294 (proton acceptor) is an active-site residue. Positions 295, 327, and 379 each coordinate substrate.

The protein belongs to the RuBisCO large chain family. Type I subfamily. Heterohexadecamer of 8 large chains and 8 small chains; disulfide-linked. The disulfide link is formed within the large subunit homodimers. It depends on Mg(2+) as a cofactor. In terms of processing, the disulfide bond which can form in the large chain dimeric partners within the hexadecamer appears to be associated with oxidative stress and protein turnover.

Its subcellular location is the plastid. The protein resides in the chloroplast. The enzyme catalyses 2 (2R)-3-phosphoglycerate + 2 H(+) = D-ribulose 1,5-bisphosphate + CO2 + H2O. The catalysed reaction is D-ribulose 1,5-bisphosphate + O2 = 2-phosphoglycolate + (2R)-3-phosphoglycerate + 2 H(+). In terms of biological role, ruBisCO catalyzes two reactions: the carboxylation of D-ribulose 1,5-bisphosphate, the primary event in carbon dioxide fixation, as well as the oxidative fragmentation of the pentose substrate in the photorespiration process. Both reactions occur simultaneously and in competition at the same active site. This Pinus pinea (Italian stone pine) protein is Ribulose bisphosphate carboxylase large chain.